The chain runs to 128 residues: Ribonuclease P protein component 4 (128 aa).

Residues C63, C66, C92, and C95 each contribute to the Zn(2+) site.

It belongs to the eukaryotic/archaeal RNase P protein component 4 family. As to quaternary structure, consists of a catalytic RNA component and at least 4 protein subunits. Forms a subcomplex with Rnp1 which stimulates the catalytic RNA. It depends on Zn(2+) as a cofactor.

Its subcellular location is the cytoplasm. It catalyses the reaction Endonucleolytic cleavage of RNA, removing 5'-extranucleotides from tRNA precursor.. Part of ribonuclease P, a protein complex that generates mature tRNA molecules by cleaving their 5'-ends. In Methanocaldococcus jannaschii (strain ATCC 43067 / DSM 2661 / JAL-1 / JCM 10045 / NBRC 100440) (Methanococcus jannaschii), this protein is Ribonuclease P protein component 4.